Here is a 576-residue protein sequence, read N- to C-terminus: Potassium-transporting ATPase potassium-binding subunit (576 aa).

The next 12 membrane-spanning stretches (helical) occupy residues 4 to 24 (QAWI…WPLG), 65 to 85 (AYAL…YALQ), 136 to 156 (ALGV…FALI), 179 to 199 (VYVL…QGVI), 257 to 277 (LSNF…VFAF), 288 to 308 (GALL…VTSL), 341 to 361 (FGIA…CGAV), 371 to 391 (LGGA…GGVG), 393 to 413 (GLYG…LMIG), 430 to 450 (MTAV…AVAL), 497 to 517 (LLLA…VLAI), and 540 to 560 (LFVV…YVPA).

The protein belongs to the KdpA family. In terms of assembly, the system is composed of three essential subunits: KdpA, KdpB and KdpC.

It is found in the cell inner membrane. Part of the high-affinity ATP-driven potassium transport (or Kdp) system, which catalyzes the hydrolysis of ATP coupled with the electrogenic transport of potassium into the cytoplasm. This subunit binds the periplasmic potassium ions and delivers the ions to the membrane domain of KdpB through an intramembrane tunnel. This is Potassium-transporting ATPase potassium-binding subunit from Methylibium petroleiphilum (strain ATCC BAA-1232 / LMG 22953 / PM1).